The primary structure comprises 202 residues: UDP-N-acetylglucosamine transferase subunit ALG13 (202 aa).

It belongs to the glycosyltransferase 28 family. As to quaternary structure, heterodimer with ALG14 to form a functional enzyme.

It localises to the endoplasmic reticulum. It carries out the reaction an N-acetyl-alpha-D-glucosaminyl-diphospho-di-trans,poly-cis-dolichol + UDP-N-acetyl-alpha-D-glucosamine = an N,N'-diacetylchitobiosyl-diphospho-di-trans,poly-cis-dolichol + UDP + H(+). In terms of biological role, involved in protein N-glycosylation. Essential for the second step of the dolichol-linked oligosaccharide pathway. This Saccharomyces cerevisiae (strain ATCC 204508 / S288c) (Baker's yeast) protein is UDP-N-acetylglucosamine transferase subunit ALG13 (ALG13).